The chain runs to 530 residues: Cytochrome P450 monooxygenase aneG (530 aa).

Asn2 carries an N-linked (GlcNAc...) asparagine glycan. A helical membrane pass occupies residues 43–63; that stretch reads WLSILGFTIGCYYVIYTFYAL. N-linked (GlcNAc...) asparagine glycosylation occurs at Asn92. Residue Cys474 participates in heme binding.

It belongs to the cytochrome P450 family. The cofactor is heme.

The protein localises to the membrane. It catalyses the reaction asperaculane E + reduced [NADPH--hemoprotein reductase] + O2 = asperaculane G + oxidized [NADPH--hemoprotein reductase] + H2O + H(+). The catalysed reaction is asperaculane G + reduced [NADPH--hemoprotein reductase] + O2 = aculene D + oxidized [NADPH--hemoprotein reductase] + CO2 + 2 H2O. It carries out the reaction asperaculane E + 2 reduced [NADPH--hemoprotein reductase] + 2 O2 = aculene D + 2 oxidized [NADPH--hemoprotein reductase] + CO2 + 3 H2O + H(+). It functions in the pathway secondary metabolite biosynthesis. Its function is as follows. Cytochrome P450 monooxygenase; part of the gene cluster that mediates the biosynthesis of aculenes, a unique type of norsesquiterpenes that contain a nordaucane skeleton linked to an L-proline moiety and are of mixed biosynthetic origin. The pathway begins with the synthesis of dauca-4,7-diene by the terpene cyclase aneC using farnesyl pyrophosphate (FPP) as substrate. The cytochrome P450 monooxygenase aneF then performs the initial oxidation at C-12 of dauca-4,7-diene to yield asperaculane D. Asperaculane D is substrate of the cytochrome P450 monooxygenase aneD for C-10 hydroxylation to yield asperaculane E. The cytochrome P450 monooxygenase aneG then converts asperaculane E into aculene D via C-2 oxidation. The monomodular nonribosomal peptide synthtase aneB adenylates L-proline and the thiohydrolase aneE transfers this activated L-proline derivative to aculenes D and C to produce respectively aculenes B and A. The dioxygenase aneA converts aculene D into aculene C, and aculene B into aculene A by introducing the 5,6-alkene moiety. Asperculanes A, B, C and F, as well as 14-prolyl asperculane C, might be shunt products of the pathway. The polypeptide is Cytochrome P450 monooxygenase aneG (Aspergillus aculeatus (strain ATCC 16872 / CBS 172.66 / WB 5094)).